Here is a 239-residue protein sequence, read N- to C-terminus: L-cystine transport system permease protein TcyL (239 aa).

Residues 21–216 (LPVTLYILTL…AVAVLFEWFF (196 aa)) form the ABC transmembrane type-1 domain. A run of 4 helical transmembrane segments spans residues 25 to 45 (LYIL…LALP), 69 to 89 (IMVQ…LIGI), 96 to 116 (PFYA…AEII), and 196 to 216 (EVYI…EWFF).

The protein belongs to the binding-protein-dependent transport system permease family. In terms of assembly, the complex is composed of two ATP-binding proteins (TcyN), two transmembrane proteins (TcyL and TcyM) and two solute-binding proteins (TcyJ and TcyK).

The protein localises to the cell membrane. Functionally, part of the ABC transporter complex TcyJKLMN involved in L-cystine import. Probably responsible for the translocation of the substrate across the membrane. Is also involved in cystathionine, djenkolate, and S-methylcysteine transport. The polypeptide is L-cystine transport system permease protein TcyL (tcyL) (Bacillus subtilis (strain 168)).